A 438-amino-acid chain; its full sequence is Protein DJ-1 homolog B (438 aa).

Residues 1–45 (MASSSLCHRYFNKITVTPFFNTKKLHHYSPRRISLRVNRRSFSIS) constitute a chloroplast transit peptide. PfpI endopeptidase domains follow at residues 53–220 (KKVL…EQLL) and 258–424 (PQIL…EKFY).

Belongs to the peptidase C56 family. As to quaternary structure, homodimer.

The protein resides in the plastid. It is found in the chloroplast. In terms of biological role, may be involved in oxidative stress response. The polypeptide is Protein DJ-1 homolog B (DJ1B) (Arabidopsis thaliana (Mouse-ear cress)).